Consider the following 455-residue polypeptide: UDP-glycosyltransferase 79B2 (455 aa).

UDP-alpha-D-glucose-binding positions include Ser-266, 325 to 327 (VQQ), 342 to 350 (HCGFGSMWE), and 364 to 367 (LGDQ).

Belongs to the UDP-glycosyltransferase family.

In Arabidopsis thaliana (Mouse-ear cress), this protein is UDP-glycosyltransferase 79B2 (UGT79B2).